The following is a 319-amino-acid chain: Meiotic drive suppressor wtf16 (319 aa).

Disordered regions lie at residues 1–22 and 35–68; these read MKNNYTSLKSPIDEGDESKTGH and DSEEEGALPPYSDHARVSNSPNTHRENNPSRSTD. The next 6 helical transmembrane spans lie at 73 to 93, 110 to 130, 153 to 173, 187 to 207, 215 to 235, and 241 to 261; these read FLIKLLISFTPIYVLNVLAIC, WTLFGFWCLVCTLALIFLTYF, VVIIWLLWVVICFVLFGCIKF, CSISAALLLFLLYVRLPFWTL, FQVLGVQSCVVIVTKGLMYLF, and ATGYEIEATSLFVIGNFFFFY.

This sequence belongs to the WTF family. As to quaternary structure, homomer. Interacts with other proteins that exhibit high sequence similarity.

It localises to the spore membrane. It is found in the vacuole membrane. Functionally, acts as a suppressor component of the dual wtf meiotic drive system, and can suppress but not confer meiotic drive by compatible poisons. Wtf meiotic drive systems promote unequal transmission of alleles from the parental zygote to progeny spores by encoding a poison and an antidote from the same locus; the poison is trans-acting and forms toxic aggregates in all spores within an ascus, wherease the antidote is spore-specific and targets aggregates for degradation by the vacuole. Meiotic drive by wtf systems therefore lead to poisoning of all progeny that do not inherit the dual poison/antidote allele, or express a compatible antidote. The protein is Meiotic drive suppressor wtf16 of Schizosaccharomyces pombe (strain 972 / ATCC 24843) (Fission yeast).